The following is a 363-amino-acid chain: Putative dipeptidase YkvY (363 aa).

Mn(2+)-binding residues include Asp222, Asp233, His297, Glu326, and Glu340.

It belongs to the peptidase M24B family. Requires Mn(2+) as cofactor.

The protein is Putative dipeptidase YkvY (ykvY) of Bacillus subtilis (strain 168).